The chain runs to 782 residues: E3 ubiquitin-protein ligase SopA (782 aa).

Positions 140-170 (SANNRPTVSEGRTPPVSPSLSLQATSSPSSP) are disordered. Residues 157–170 (PSLSLQATSSPSSP) show a composition bias toward low complexity. C753 functions as the Glycyl thioester intermediate in the catalytic mechanism.

This sequence belongs to the SopA E3 ligase family. In terms of processing, ubiquitinated in the presence of host E1 ubiquitin-activating enzyme, E2 ubiquitin-conjugating enzyme and ubiquitin.

Its subcellular location is the secreted. The protein localises to the host cell. It catalyses the reaction S-ubiquitinyl-[E2 ubiquitin-conjugating enzyme]-L-cysteine + [acceptor protein]-L-lysine = [E2 ubiquitin-conjugating enzyme]-L-cysteine + N(6)-ubiquitinyl-[acceptor protein]-L-lysine.. Functionally, effector proteins function to alter host cell physiology and promote bacterial survival in host tissues. This protein is an E3 ubiquitin ligase that interferes with host's ubiquitination pathway. This chain is E3 ubiquitin-protein ligase SopA (sopA), found in Salmonella agona (strain SL483).